A 473-amino-acid polypeptide reads, in one-letter code: Phosphatidylserine synthase 1 (473 aa).

Position 2 is an N-acetylalanine (Ala2). The Cytoplasmic portion of the chain corresponds to 2–35; the sequence is ASCVGSRTLSKDDVNYKMHFRMINEQQVEDITID. The chain crosses the membrane as a helical span at residues 36–56; that stretch reads FFYRPHTITLLSFTIVSLMYF. The Lumenal portion of the chain corresponds to 57–72; sequence AFTRDDSVPEDNIWRG. The helical transmembrane segment at 73–93 threads the bilayer; it reads ILSVIFFFLIISVLAFPNGPF. The Cytoplasmic segment spans residues 94 to 102; the sequence is TRPHPALWR. Residues 103–123 traverse the membrane as a helical segment; that stretch reads MVFGLSVLYFLFLVFLLFLNF. At 124–186 the chain is on the lumenal side; the sequence is EQVKSLMYWL…AMKALLIRSY (63 aa). A helical transmembrane segment spans residues 187 to 207; it reads GLCWTISITWELTELFFMHLL. Residues 208-216 lie on the Cytoplasmic side of the membrane; sequence PNFAECWWD. The helical transmembrane segment at 217–237 threads the bilayer; it reads QVILDILLCNGGGIWLGMVVC. At 238–286 the chain is on the lumenal side; it reads RFLEMRTYHWASFKDIHTTTGKIKRAVLQFTPASWTYVRWFDPKSSFQR. A helical membrane pass occupies residues 287–307; that stretch reads VAGVYLFMIIWQLTELNTFFL. Residues 308 to 319 lie on the Cytoplasmic side of the membrane; sequence KHIFVFQASHPL. Residues 320–342 traverse the membrane as a helical segment; sequence SWGRILFIGGITAPTVRQYYAYL. The Lumenal portion of the chain corresponds to 343 to 355; it reads TDTQCKRVGTQCW. The helical transmembrane segment at 356 to 376 threads the bilayer; that stretch reads VFGVIGFLEAIVCIKFGQDLF. The Cytoplasmic portion of the chain corresponds to 377–383; that stretch reads SKTQILY. Residues 384–404 traverse the membrane as a helical segment; sequence VVLWLLCVAFTTFLCLYGMIW. Over 405-473 the chain is Lumenal; that stretch reads YAEHYGHREK…SKVTNGVGKK (69 aa). A phosphoserine mark is found at Ser417, Ser425, Ser442, and Ser454. Positions 430-473 are disordered; it reads WHHRKGTKGSEDSPPKHAGNNESHSSRRRNRHSKSKVTNGVGKK. A compositionally biased stretch (basic residues) spans 455–464; that stretch reads SRRRNRHSKS.

Belongs to the phosphatidyl serine synthase family.

It is found in the endoplasmic reticulum membrane. The enzyme catalyses a 1,2-diacyl-sn-glycero-3-phosphoethanolamine + L-serine = a 1,2-diacyl-sn-glycero-3-phospho-L-serine + ethanolamine. It carries out the reaction a 1,2-diacyl-sn-glycero-3-phosphocholine + L-serine = a 1,2-diacyl-sn-glycero-3-phospho-L-serine + choline. The protein operates within phospholipid metabolism; phosphatidylserine biosynthesis. Its activity is regulated as follows. Requires calcium ions. Inhibited by exogenous phosphatidylserine. Its function is as follows. Catalyzes a base-exchange reaction in which the polar head group of phosphatidylethanolamine (PE) or phosphatidylcholine (PC) is replaced by L-serine. Catalyzes mainly the conversion of phosphatidylcholine. Also converts, in vitro and to a lesser extent, phosphatidylethanolamine. In Homo sapiens (Human), this protein is Phosphatidylserine synthase 1 (PTDSS1).